The following is a 238-amino-acid chain: Ribonuclease PH (238 aa).

The tract at residues 66–88 (LPRSTHTRSDREAARGKQSGRTQ) is disordered. Phosphate is bound by residues R86 and 124-126 (GTR).

It belongs to the RNase PH family. In terms of assembly, homohexameric ring arranged as a trimer of dimers.

The catalysed reaction is tRNA(n+1) + phosphate = tRNA(n) + a ribonucleoside 5'-diphosphate. Functionally, phosphorolytic 3'-5' exoribonuclease that plays an important role in tRNA 3'-end maturation. Removes nucleotide residues following the 3'-CCA terminus of tRNAs; can also add nucleotides to the ends of RNA molecules by using nucleoside diphosphates as substrates, but this may not be physiologically important. Probably plays a role in initiation of 16S rRNA degradation (leading to ribosome degradation) during starvation. The protein is Ribonuclease PH of Ralstonia pickettii (strain 12J).